A 149-amino-acid chain; its full sequence is Putative mediator of RNA polymerase II transcription subunit 22 (149 aa).

The protein belongs to the Mediator complex subunit 22 family. Component of the Mediator complex.

It is found in the nucleus. Functionally, component of the Mediator complex, a coactivator involved in the regulated transcription of nearly all RNA polymerase II-dependent genes. Mediator functions as a bridge to convey information from gene-specific regulatory proteins to the basal RNA polymerase II transcription machinery. Mediator is recruited to promoters by direct interactions with regulatory proteins and serves as a scaffold for the assembly of a functional preinitiation complex with RNA polymerase II and the general transcription factors. This Dictyostelium discoideum (Social amoeba) protein is Putative mediator of RNA polymerase II transcription subunit 22 (med22).